Here is a 331-residue protein sequence, read N- to C-terminus: Methionyl-tRNA formyltransferase (331 aa).

110–113 provides a ligand contact to (6S)-5,6,7,8-tetrahydrofolate; the sequence is SLLP. Residues 312–331 form a disordered region; it reads HAPAERVSAAGSPAGAGGAP.

The protein belongs to the Fmt family.

It carries out the reaction L-methionyl-tRNA(fMet) + (6R)-10-formyltetrahydrofolate = N-formyl-L-methionyl-tRNA(fMet) + (6S)-5,6,7,8-tetrahydrofolate + H(+). Its function is as follows. Attaches a formyl group to the free amino group of methionyl-tRNA(fMet). The formyl group appears to play a dual role in the initiator identity of N-formylmethionyl-tRNA by promoting its recognition by IF2 and preventing the misappropriation of this tRNA by the elongation apparatus. This Frankia alni (strain DSM 45986 / CECT 9034 / ACN14a) protein is Methionyl-tRNA formyltransferase.